The sequence spans 112 residues: Nitrogen regulatory protein GlnK1 (112 aa).

Thr29 provides a ligand contact to ADP. ATP-binding residues include Thr29 and Val38. 52–54 provides a ligand contact to 2-oxoglutarate; sequence IVD. Residues Val64, 88–90, and 101–103 contribute to the ADP site; these read DGK and RVR. ATP contacts are provided by residues Val64, 86-90, and 101-103; these read PGDGK and RVR.

Belongs to the P(II) protein family. As to quaternary structure, homotrimer. Interacts and forms a complex with Amt1.

Its subcellular location is the cytoplasm. Its activity is regulated as follows. Formation of the GlnK1/Amt1 complex is decreased in the presence of Mg-ATP or 2-oxoglutarate. The presence of both effectors abolishes the formation of the complex. Involved in the regulation of nitrogen metabolism. Regulates the activity of its targets by protein-protein interaction in response to the nitrogen status of the cell. Regulates the activity of the ammonia channel Amt1 via direct interaction. The polypeptide is Nitrogen regulatory protein GlnK1 (Methanocaldococcus jannaschii (strain ATCC 43067 / DSM 2661 / JAL-1 / JCM 10045 / NBRC 100440) (Methanococcus jannaschii)).